Consider the following 223-residue polypeptide: Exosome complex component RRP46 (223 aa).

Belongs to the RNase PH family. As to quaternary structure, component of the RNA exosome complex. Specifically part of the catalytically inactive RNA exosome core complex (Exo-9) which may associate with the catalytic subunits RRP6 and DIS3 in cytoplasmic- and nuclear-specific RNA exosome complex forms. Exo-9 is formed by a hexameric base ring of RNase PH domain-containing subunits and a cap ring consisting of CSL4, RRP4 and RRP40.

The protein resides in the cytoplasm. It localises to the nucleus. Its subcellular location is the nucleolus. Functionally, non-catalytic component of the RNA exosome complex which has 3'-&gt;5' exoribonuclease activity and participates in a multitude of cellular RNA processing and degradation events. In the nucleus, the RNA exosome complex is involved in proper maturation of stable RNA species such as rRNA, snRNA and snoRNA, in the elimination of RNA processing by-products and non-coding 'pervasive' transcripts, such as antisense RNA species and cryptic unstable transcripts (CUTs), and of mRNAs with processing defects, thereby limiting or excluding their export to the cytoplasm. In the cytoplasm, the RNA exosome complex is involved in general mRNA turnover and in RNA surveillance pathways, preventing translation of aberrant mRNAs. The catalytic inactive RNA exosome core complex of 9 subunits (Exo-9) is proposed to play a pivotal role in the binding and presentation of RNA for ribonucleolysis, and to serve as a scaffold for the association with catalytic subunits and accessory proteins or complexes. RRP46 is part of the hexameric ring of RNase PH domain-containing subunits proposed to form a central channel which threads RNA substrates for degradation. The chain is Exosome complex component RRP46 (RRP46) from Saccharomyces cerevisiae (strain ATCC 204508 / S288c) (Baker's yeast).